Consider the following 133-residue polypeptide: Holo-[acyl-carrier-protein] synthase (133 aa).

Mg(2+) contacts are provided by D8 and E57.

This sequence belongs to the P-Pant transferase superfamily. AcpS family. It depends on Mg(2+) as a cofactor.

It localises to the cytoplasm. It catalyses the reaction apo-[ACP] + CoA = holo-[ACP] + adenosine 3',5'-bisphosphate + H(+). Its function is as follows. Transfers the 4'-phosphopantetheine moiety from coenzyme A to a Ser of acyl-carrier-protein. This chain is Holo-[acyl-carrier-protein] synthase, found in Chelativorans sp. (strain BNC1).